A 24-amino-acid chain; its full sequence is FLPLLAGLAANFFPKIFCKITRKC.

Cysteines 18 and 24 form a disulfide.

As to expression, expressed by the skin glands.

The protein resides in the secreted. Shows antibacterial activity against representative Gram-negative and Gram-positive bacterial species, and hemolytic activity. The protein is Brevinin-1Ecb of Pelophylax ridibundus (Marsh frog).